A 102-amino-acid polypeptide reads, in one-letter code: Urease subunit beta (102 aa).

Belongs to the urease beta subunit family. As to quaternary structure, heterotrimer of UreA (gamma), UreB (beta) and UreC (alpha) subunits. Three heterotrimers associate to form the active enzyme.

The protein localises to the cytoplasm. The catalysed reaction is urea + 2 H2O + H(+) = hydrogencarbonate + 2 NH4(+). It functions in the pathway nitrogen metabolism; urea degradation; CO(2) and NH(3) from urea (urease route): step 1/1. This chain is Urease subunit beta, found in Acinetobacter baumannii (strain ACICU).